Here is a 426-residue protein sequence, read N- to C-terminus: Glucose-1-phosphate adenylyltransferase (426 aa).

Alpha-D-glucose 1-phosphate is bound by residues G165, 180-181 (EK), and S191.

This sequence belongs to the bacterial/plant glucose-1-phosphate adenylyltransferase family. Homotetramer.

It carries out the reaction alpha-D-glucose 1-phosphate + ATP + H(+) = ADP-alpha-D-glucose + diphosphate. It functions in the pathway glycan biosynthesis; glycogen biosynthesis. In terms of biological role, involved in the biosynthesis of ADP-glucose, a building block required for the elongation reactions to produce glycogen. Catalyzes the reaction between ATP and alpha-D-glucose 1-phosphate (G1P) to produce pyrophosphate and ADP-Glc. The polypeptide is Glucose-1-phosphate adenylyltransferase (Ruminiclostridium cellulolyticum (strain ATCC 35319 / DSM 5812 / JCM 6584 / H10) (Clostridium cellulolyticum)).